Here is a 201-residue protein sequence, read N- to C-terminus: Ribosomal RNA large subunit methyltransferase E (201 aa).

S-adenosyl-L-methionine-binding residues include glycine 49, tryptophan 51, aspartate 69, aspartate 90, and aspartate 113. The active-site Proton acceptor is lysine 153.

The protein belongs to the class I-like SAM-binding methyltransferase superfamily. RNA methyltransferase RlmE family.

The protein localises to the cytoplasm. It catalyses the reaction uridine(2552) in 23S rRNA + S-adenosyl-L-methionine = 2'-O-methyluridine(2552) in 23S rRNA + S-adenosyl-L-homocysteine + H(+). In terms of biological role, specifically methylates the uridine in position 2552 of 23S rRNA at the 2'-O position of the ribose in the fully assembled 50S ribosomal subunit. The polypeptide is Ribosomal RNA large subunit methyltransferase E (Desulfotalea psychrophila (strain LSv54 / DSM 12343)).